We begin with the raw amino-acid sequence, 95 residues long: UPF0213 protein ESA_03545 (95 aa).

The GIY-YIG domain occupies 2–77; sequence EEWFLYLIRC…KQLTKRQKEQ (76 aa).

Belongs to the UPF0213 family.

This is UPF0213 protein ESA_03545 from Cronobacter sakazakii (strain ATCC BAA-894) (Enterobacter sakazakii).